A 189-amino-acid polypeptide reads, in one-letter code: 6,7-dimethyl-8-ribityllumazine synthase (189 aa).

5-amino-6-(D-ribitylamino)uracil-binding positions include Trp-31, 65–67, and 89–91; these read SFE and CVI. 94–95 provides a ligand contact to (2S)-2-hydroxy-3-oxobutyl phosphate; sequence ET. His-97 functions as the Proton donor in the catalytic mechanism. Residue Phe-122 coordinates 5-amino-6-(D-ribitylamino)uracil. A (2S)-2-hydroxy-3-oxobutyl phosphate-binding site is contributed by Arg-136.

It belongs to the DMRL synthase family.

The catalysed reaction is (2S)-2-hydroxy-3-oxobutyl phosphate + 5-amino-6-(D-ribitylamino)uracil = 6,7-dimethyl-8-(1-D-ribityl)lumazine + phosphate + 2 H2O + H(+). It functions in the pathway cofactor biosynthesis; riboflavin biosynthesis; riboflavin from 2-hydroxy-3-oxobutyl phosphate and 5-amino-6-(D-ribitylamino)uracil: step 1/2. Catalyzes the formation of 6,7-dimethyl-8-ribityllumazine by condensation of 5-amino-6-(D-ribitylamino)uracil with 3,4-dihydroxy-2-butanone 4-phosphate. This is the penultimate step in the biosynthesis of riboflavin. This is 6,7-dimethyl-8-ribityllumazine synthase from Flavobacterium psychrophilum (strain ATCC 49511 / DSM 21280 / CIP 103535 / JIP02/86).